Consider the following 63-residue polypeptide: Large ribosomal subunit protein bL32c (63 aa).

Positions 39-63 (SFSSGNEHPKPKGFSGQQTNNKIFE) are disordered. A compositionally biased stretch (polar residues) spans 53-63 (SGQQTNNKIFE).

This sequence belongs to the bacterial ribosomal protein bL32 family.

It localises to the plastid. It is found in the chloroplast. This Triticum aestivum (Wheat) protein is Large ribosomal subunit protein bL32c.